The chain runs to 160 residues: MLQIKIVAVGKIRERFLMEGIKEYAKRLSAYIRLEMTEIADEPCPERLSAADEERVKDREGERLLKGIGPQEHVILLDLQGKEFTSPDFSEYMDDLALMGKSSVTFIIGGSLGVSGEVRKRADYRWSFSRLTFPHPLMRLMLLEQIYRAMRISKGEPYHK.

S-adenosyl-L-methionine contacts are provided by residues Leu77, Gly109, and 128–133 (FSRLTF).

It belongs to the RNA methyltransferase RlmH family. As to quaternary structure, homodimer.

Its subcellular location is the cytoplasm. The enzyme catalyses pseudouridine(1915) in 23S rRNA + S-adenosyl-L-methionine = N(3)-methylpseudouridine(1915) in 23S rRNA + S-adenosyl-L-homocysteine + H(+). In terms of biological role, specifically methylates the pseudouridine at position 1915 (m3Psi1915) in 23S rRNA. The protein is Ribosomal RNA large subunit methyltransferase H of Desulfitobacterium hafniense (strain Y51).